The primary structure comprises 307 residues: Histone deacetylase HDT1 (307 aa).

The span at 98-112 shows a compositional bias: acidic residues; sequence EDEMDLDSEDEDEEL. A disordered region spans residues 98-280; the sequence is EDEMDLDSED…KSGGSVPCKP (183 aa). Basic and acidic residues predominate over residues 119-132; it reads ENGKADEKKQKSQE. The span at 151-197 shows a compositional bias: acidic residues; the sequence is DDDSDEDETDDSDEDETDDSDEGLSSEEGDDDSSDEDDTSDDEEEDT. A compositionally biased stretch (basic and acidic residues) spans 198-211; the sequence is PTPKKPEVGKKRPA. Positions 265–277 are enriched in low complexity; it reads SPKSAPKSGGSVP. The C2H2-type; degenerate zinc-finger motif lies at 276 to 299; the sequence is VPCKPCSKSFISETALQAHSRAKM.

This sequence belongs to the histone deacetylase HD2 family. In terms of assembly, multimer. Isolated as a trimer composed of 3 proteins of 39, 42 and 45 kDa, possibly a homotrimer with different phosphorylation status or a heterotrimer with HDT2 and/or HDT3. In terms of processing, the N-terminus is blocked. Phosphorylated. Required for enzyme activity.

It localises to the nucleus. The protein resides in the nucleolus. With respect to regulation, inhibited by 3-(4-Aroyl-1-methyl-1H-pyrrol-2-yl)-N-hydroxy-2-propenamides. 3-(1-methyl-4-phenylacetyl-1H-pyrrol-2-yl)-N-hydroxy-2-propenamide 1b and 3-[1-methyl-4-(3-phenyl-2-propenoyl)-1H-pyrrol-2-yl]-N-hydroxy-2-propenamide 1c are very potent inhibitors. Mediates the deacetylation of lysine residues on the N-terminal part of the core histones (H2A, H2B, H3 and H4). Histone deacetylation gives a tag for epigenetic repression and plays an important role in transcriptional regulation, cell cycle progression and developmental events. Able to deacetylate all 4 core histones. The polypeptide is Histone deacetylase HDT1 (HDT1) (Zea mays (Maize)).